An 813-amino-acid polypeptide reads, in one-letter code: Leucine--tRNA ligase (813 aa).

A 'HIGH' region motif is present at residues Pro41–His51. The 'KMSKS' region motif lies at Lys575–Ser579. Lys578 serves as a coordination point for ATP.

Belongs to the class-I aminoacyl-tRNA synthetase family.

Its subcellular location is the cytoplasm. The catalysed reaction is tRNA(Leu) + L-leucine + ATP = L-leucyl-tRNA(Leu) + AMP + diphosphate. The sequence is that of Leucine--tRNA ligase from Francisella tularensis subsp. holarctica (strain FTNF002-00 / FTA).